Consider the following 1233-residue polypeptide: Integrator complex subunit 4 homolog (1233 aa).

2 HEAT repeats span residues 236-273 and 275-310; these read SLIN…NLDK and SEEI…RGAS. The interval 426–473 is disordered; the sequence is RLQQKQQQQQQQQQQQQQQPPQQQPSQQPNQQPNQQQTNVSGTHIATP. Positions 428–462 are enriched in low complexity; the sequence is QQKQQQQQQQQQQQQQQPPQQQPSQQPNQQPNQQQ. HEAT repeat units follow at residues 487 to 524, 525 to 561, and 563 to 597; these read ILES…RNDE, FAQK…NVVI, and EEQL…SNYS. Positions 767–792 are enriched in low complexity; the sequence is NNNTNNNNNNNNNNNNNNNNNNNNNN. 2 disordered regions span residues 767–796 and 993–1057; these read NNNT…DEND and DKKL…TTTT. Residues 1000–1013 are compositionally biased toward acidic residues; that stretch reads EENEENEENENNEN. Basic and acidic residues predominate over residues 1014–1030; sequence ENEKENGKNKEKEKNEN. The segment covering 1046–1057 has biased composition (low complexity); the sequence is KTTSELIKTTTT.

Belongs to the Integrator subunit 4 family. As to quaternary structure, component of the Integrator complex. The core complex associates with protein phosphatase 2A subunits, to form the Integrator-PP2A (INTAC) complex.

The protein localises to the nucleus. It is found in the cytoplasm. Component of the integrator complex, a multiprotein complex that terminates RNA polymerase II (Pol II) transcription in the promoter-proximal region of genes. The integrator complex provides a quality checkpoint during transcription elongation by driving premature transcription termination of transcripts that are unfavorably configured for transcriptional elongation: the complex terminates transcription by (1) catalyzing dephosphorylation of the C-terminal domain (CTD) of Pol II subunit polr2a, (2) degrading the exiting nascent RNA transcript via endonuclease activity and (3) promoting the release of Pol II from bound DNA. The integrator complex is also involved in terminating the synthesis of non-coding Pol II transcripts, such as enhancer RNAs (eRNAs), small nuclear RNAs (snRNAs), telomerase RNAs and long non-coding RNAs (lncRNAs). This Dictyostelium discoideum (Social amoeba) protein is Integrator complex subunit 4 homolog (ints4).